A 428-amino-acid polypeptide reads, in one-letter code: Flotillin-1 (428 aa).

Phosphoserine is present on residues Ser-19, Ser-163, and Ser-385. Thr-387 is subject to Phosphothreonine.

The protein belongs to the band 7/mec-2 family. Flotillin subfamily. In terms of assembly, heterooligomeric complex of flotillin-1 and flotillin-2 and caveolin-1 and caveolin-2. Interacts with ECPAS. High expression in brain, white adipose tissue, heart muscle, skeletal muscle and lung. Low expression in spleen, liver and testis.

It is found in the cell membrane. The protein localises to the endosome. The protein resides in the membrane. It localises to the caveola. Its subcellular location is the melanosome. It is found in the membrane raft. Functionally, may act as a scaffolding protein within caveolar membranes, functionally participating in formation of caveolae or caveolae-like vesicles. This chain is Flotillin-1 (Flot1), found in Mus musculus (Mouse).